Reading from the N-terminus, the 85-residue chain is ATP synthase epsilon chain (85 aa).

This sequence belongs to the ATPase epsilon chain family. In terms of assembly, F-type ATPases have 2 components, CF(1) - the catalytic core - and CF(0) - the membrane proton channel. CF(1) has five subunits: alpha(3), beta(3), gamma(1), delta(1), epsilon(1). CF(0) has three main subunits: a, b and c.

The protein localises to the cell membrane. Its function is as follows. Produces ATP from ADP in the presence of a proton gradient across the membrane. This Frankia casuarinae (strain DSM 45818 / CECT 9043 / HFP020203 / CcI3) protein is ATP synthase epsilon chain.